Reading from the N-terminus, the 418-residue chain is Galactooligosaccharides transport system permease protein GanP (418 aa).

A run of 9 helical transmembrane segments spans residues 25-45 (IKGI…GDLL), 65-85 (VFLL…LAVY), 129-149 (LFIL…LAFT), 191-211 (VVWT…LAII), 226-246 (ILIL…AGLF), 279-299 (LILM…TGVL), 323-343 (YITL…QFTF), 357-379 (GGPA…IYKL), and 388-408 (LAAA…LWQF). The region spanning 187-407 (LAWTVVWTLA…VFVISIALWQ (221 aa)) is the ABC transmembrane type-1 domain.

Belongs to the binding-protein-dependent transport system permease family. The complex is composed of two ATP-binding proteins (MsmX), two transmembrane proteins (GanP and GanQ) and a solute-binding protein (GanS).

The protein localises to the cell membrane. Involved in galactan degradation. Part of the ABC transporter complex GanPQS involved in the uptake of galactooligosaccharides. Responsible for the translocation of the substrate across the membrane. In Bacillus subtilis (strain 168), this protein is Galactooligosaccharides transport system permease protein GanP (ganP).